Reading from the N-terminus, the 468-residue chain is Cysteine--tRNA ligase (468 aa).

C28 is a Zn(2+) binding site. A 'HIGH' region motif is present at residues 30–40 (PTVYNYIHIGN). 3 residues coordinate Zn(2+): C212, H237, and E241. A 'KMSKS' region motif is present at residues 271-275 (KMSKS). K274 contacts ATP.

Belongs to the class-I aminoacyl-tRNA synthetase family. Monomer. Zn(2+) serves as cofactor.

It localises to the cytoplasm. The enzyme catalyses tRNA(Cys) + L-cysteine + ATP = L-cysteinyl-tRNA(Cys) + AMP + diphosphate. The chain is Cysteine--tRNA ligase from Latilactobacillus sakei subsp. sakei (strain 23K) (Lactobacillus sakei subsp. sakei).